An 87-amino-acid polypeptide reads, in one-letter code: U3-theraphotoxin-Hhn1i (87 aa).

Positions 1–24 (MVNMEASMFLTFAGLVLLFVVCYA) are cleaved as a signal peptide. Residues 25-52 (SESEEKEFPKEMLSSIFAVDNDFKQEER) constitute a propeptide that is removed on maturation. Cystine bridges form between cysteine 54–cysteine 67, cysteine 61–cysteine 72, and cysteine 66–cysteine 79.

The protein belongs to the neurotoxin 10 (Hwtx-1) family. 51 (Hntx-8) subfamily. Hntx-8 sub-subfamily. As to expression, expressed by the venom gland.

The protein resides in the secreted. Ion channel inhibitor. The chain is U3-theraphotoxin-Hhn1i from Cyriopagopus hainanus (Chinese bird spider).